We begin with the raw amino-acid sequence, 356 residues long: Phosphate acyltransferase (356 aa).

It belongs to the PlsX family. Homodimer. Probably interacts with PlsY.

It localises to the cytoplasm. It catalyses the reaction a fatty acyl-[ACP] + phosphate = an acyl phosphate + holo-[ACP]. It functions in the pathway lipid metabolism; phospholipid metabolism. Functionally, catalyzes the reversible formation of acyl-phosphate (acyl-PO(4)) from acyl-[acyl-carrier-protein] (acyl-ACP). This enzyme utilizes acyl-ACP as fatty acyl donor, but not acyl-CoA. This chain is Phosphate acyltransferase, found in Escherichia coli (strain 55989 / EAEC).